Reading from the N-terminus, the 312-residue chain is D-alanine--D-alanine ligase (312 aa).

The ATP-grasp domain maps to 108–308 (KLVWQQTGIP…YSELVVKVLS (201 aa)). Residue 138-193 (AAKLGVPLFVKPASEGSSVAVEKVKSADALPAALEEAAKHDKIVIVEKSIEGGGEY) coordinates ATP. Positions 262, 275, and 277 each coordinate Mg(2+).

The protein belongs to the D-alanine--D-alanine ligase family. The cofactor is Mg(2+). Mn(2+) is required as a cofactor.

The protein resides in the cytoplasm. It carries out the reaction 2 D-alanine + ATP = D-alanyl-D-alanine + ADP + phosphate + H(+). Its pathway is cell wall biogenesis; peptidoglycan biosynthesis. In terms of biological role, cell wall formation. In Burkholderia pseudomallei (strain 668), this protein is D-alanine--D-alanine ligase.